A 401-amino-acid polypeptide reads, in one-letter code: Glutamyl-tRNA reductase (401 aa).

Residues 49 to 52 (TCNR), S92, 97 to 99 (END), and Q103 each bind substrate. Catalysis depends on C50, which acts as the Nucleophile. NADP(+) is bound at residue 171 to 176 (GNGKMA).

It belongs to the glutamyl-tRNA reductase family. In terms of assembly, homodimer.

It catalyses the reaction (S)-4-amino-5-oxopentanoate + tRNA(Glu) + NADP(+) = L-glutamyl-tRNA(Glu) + NADPH + H(+). It participates in porphyrin-containing compound metabolism; protoporphyrin-IX biosynthesis; 5-aminolevulinate from L-glutamyl-tRNA(Glu): step 1/2. Its function is as follows. Catalyzes the NADPH-dependent reduction of glutamyl-tRNA(Glu) to glutamate 1-semialdehyde (GSA). This chain is Glutamyl-tRNA reductase, found in Picrophilus torridus (strain ATCC 700027 / DSM 9790 / JCM 10055 / NBRC 100828 / KAW 2/3).